The sequence spans 86 residues: Small ribosomal subunit protein bS20 (86 aa).

Belongs to the bacterial ribosomal protein bS20 family.

In terms of biological role, binds directly to 16S ribosomal RNA. This chain is Small ribosomal subunit protein bS20, found in Aliarcobacter butzleri (strain RM4018) (Arcobacter butzleri).